A 112-amino-acid chain; its full sequence is Ribonuclease P protein component (112 aa).

Belongs to the RnpA family. In terms of assembly, consists of a catalytic RNA component (M1 or rnpB) and a protein subunit.

It carries out the reaction Endonucleolytic cleavage of RNA, removing 5'-extranucleotides from tRNA precursor.. Its function is as follows. RNaseP catalyzes the removal of the 5'-leader sequence from pre-tRNA to produce the mature 5'-terminus. It can also cleave other RNA substrates such as 4.5S RNA. The protein component plays an auxiliary but essential role in vivo by binding to the 5'-leader sequence and broadening the substrate specificity of the ribozyme. This chain is Ribonuclease P protein component, found in Mesomycoplasma hyopneumoniae (strain 7448) (Mycoplasma hyopneumoniae).